The chain runs to 108 residues: Cell division protein FtsL (108 aa).

Residues 1 to 24 are Cytoplasmic-facing; it reads MSKDTASQPSLTKLIGLDIFGVGR. A helical membrane pass occupies residues 25–45; it reads LHAILLICIFLSAIGVVLATH. The Periplasmic portion of the chain corresponds to 46–108; that stretch reads NTRQMTVQRE…PDKEVIIKLR (63 aa).

Belongs to the FtsL family. Part of a complex composed of FtsB, FtsL and FtsQ.

It localises to the cell inner membrane. Its function is as follows. Essential cell division protein. May link together the upstream cell division proteins, which are predominantly cytoplasmic, with the downstream cell division proteins, which are predominantly periplasmic. This is Cell division protein FtsL from Aliivibrio fischeri (strain ATCC 700601 / ES114) (Vibrio fischeri).